A 419-amino-acid polypeptide reads, in one-letter code: N-acylglucosamine 2-epimerase (419 aa).

The interval 185 to 206 (LLSLVEQLGEEDEELTNMYAEL) is leucine-zipper. S418 carries the phosphoserine modification.

It belongs to the N-acylglucosamine 2-epimerase family. As to quaternary structure, homodimer. Forms a heterodimer with renin and inhibits its activity.

It carries out the reaction an N-acyl-D-glucosamine = an N-acyl-D-mannosamine. Its pathway is amino-sugar metabolism; N-acetylneuraminate degradation. In terms of biological role, catalyzes the interconversion of N-acetylglucosamine to N-acetylmannosamine. Involved in the N-glycolylneuraminic acid (Neu5Gc) degradation pathway. This chain is N-acylglucosamine 2-epimerase (Renbp), found in Mus musculus (Mouse).